The chain runs to 373 residues: Molybdenum import ATP-binding protein ModC (373 aa).

Residues 4–240 (LTPPTIRAAF…PKLPLAIARD (237 aa)) form the ABC transporter domain. ATP is bound at residue 38–45 (GPSGCGKS). One can recognise a Mop domain in the interval 299–369 (ASSILNAIAA…IKGVALAPGR (71 aa)).

This sequence belongs to the ABC transporter superfamily. Molybdate importer (TC 3.A.1.8) family. As to quaternary structure, the complex is composed of two ATP-binding proteins (ModC), two transmembrane proteins (ModB) and a solute-binding protein (ModA).

The protein resides in the cell inner membrane. The enzyme catalyses molybdate(out) + ATP + H2O = molybdate(in) + ADP + phosphate + H(+). Its function is as follows. Part of the ABC transporter complex ModABC involved in molybdenum import. Responsible for energy coupling to the transport system. The protein is Molybdenum import ATP-binding protein ModC of Rhodopseudomonas palustris (strain ATCC BAA-98 / CGA009).